The sequence spans 138 residues: Transcription antitermination protein NusB (138 aa).

Belongs to the NusB family.

In terms of biological role, involved in transcription antitermination. Required for transcription of ribosomal RNA (rRNA) genes. Binds specifically to the boxA antiterminator sequence of the ribosomal RNA (rrn) operons. The protein is Transcription antitermination protein NusB of Helicobacter pylori (strain Shi470).